The sequence spans 308 residues: Bifunctional protein FolD (308 aa).

NADP(+) contacts are provided by residues 175–177 (GRS), Ser200, and Ile241.

The protein belongs to the tetrahydrofolate dehydrogenase/cyclohydrolase family. Homodimer.

The catalysed reaction is (6R)-5,10-methylene-5,6,7,8-tetrahydrofolate + NADP(+) = (6R)-5,10-methenyltetrahydrofolate + NADPH. The enzyme catalyses (6R)-5,10-methenyltetrahydrofolate + H2O = (6R)-10-formyltetrahydrofolate + H(+). The protein operates within one-carbon metabolism; tetrahydrofolate interconversion. Catalyzes the oxidation of 5,10-methylenetetrahydrofolate to 5,10-methenyltetrahydrofolate and then the hydrolysis of 5,10-methenyltetrahydrofolate to 10-formyltetrahydrofolate. In Jannaschia sp. (strain CCS1), this protein is Bifunctional protein FolD.